Reading from the N-terminus, the 617-residue chain is Tetratricopeptide repeat protein 39B (617 aa).

TPR repeat units lie at residues 328–361, 520–553, and 561–594; these read SLILFYHARIELLKGNTEKAQETFRKCISVQEEW, CLVKLLKGCCLKNLERPLQAELCFNHVVESEKLL, and PFTLFELAFLYKSQGEIDKAIKVLETARNNYKDY.

Belongs to the TTC39 family. In terms of tissue distribution, high expression in lung and spleen. Low lower expression in liver and small intestine. Weak expression in heart, brain, kidney, adipose, and adrenal gland.

Functionally, regulates high density lipoprotein (HDL) cholesterol metabolism by promoting the ubiquitination and degradation of the oxysterols receptors LXR (NR1H2 and NR1H3). The protein is Tetratricopeptide repeat protein 39B of Mus musculus (Mouse).